A 423-amino-acid polypeptide reads, in one-letter code: Adenylosuccinate synthetase (423 aa).

Residues 13-19 (GDEGKGK) and 41-43 (GHT) contribute to the GTP site. Residue Asp14 is the Proton acceptor of the active site. Residues Asp14 and Gly41 each coordinate Mg(2+). IMP is bound by residues 14–17 (DEGK), 39–42 (NAGH), Thr130, Arg144, Gln223, Thr238, and Arg302. His42 (proton donor) is an active-site residue. 298-304 (SVTGRKR) contacts substrate. GTP is bound by residues Arg304 and 410-412 (SVG).

This sequence belongs to the adenylosuccinate synthetase family. Homodimer. Mg(2+) serves as cofactor.

It is found in the cytoplasm. The enzyme catalyses IMP + L-aspartate + GTP = N(6)-(1,2-dicarboxyethyl)-AMP + GDP + phosphate + 2 H(+). It participates in purine metabolism; AMP biosynthesis via de novo pathway; AMP from IMP: step 1/2. Plays an important role in the de novo pathway of purine nucleotide biosynthesis. Catalyzes the first committed step in the biosynthesis of AMP from IMP. The polypeptide is Adenylosuccinate synthetase (Porphyromonas gingivalis (strain ATCC BAA-308 / W83)).